The following is a 728-amino-acid chain: 1,4-alpha-glucan branching enzyme GlgB (728 aa).

Residue D405 is the Nucleophile of the active site. The active-site Proton donor is the E458.

Belongs to the glycosyl hydrolase 13 family. GlgB subfamily. Monomer.

It catalyses the reaction Transfers a segment of a (1-&gt;4)-alpha-D-glucan chain to a primary hydroxy group in a similar glucan chain.. It participates in glycan biosynthesis; glycogen biosynthesis. In terms of biological role, catalyzes the formation of the alpha-1,6-glucosidic linkages in glycogen by scission of a 1,4-alpha-linked oligosaccharide from growing alpha-1,4-glucan chains and the subsequent attachment of the oligosaccharide to the alpha-1,6 position. The chain is 1,4-alpha-glucan branching enzyme GlgB from Serratia proteamaculans (strain 568).